The sequence spans 356 residues: Histidinol-phosphate aminotransferase 2 (356 aa).

Lysine 214 carries the post-translational modification N6-(pyridoxal phosphate)lysine.

It belongs to the class-II pyridoxal-phosphate-dependent aminotransferase family. Histidinol-phosphate aminotransferase subfamily. As to quaternary structure, homodimer. It depends on pyridoxal 5'-phosphate as a cofactor.

The catalysed reaction is L-histidinol phosphate + 2-oxoglutarate = 3-(imidazol-4-yl)-2-oxopropyl phosphate + L-glutamate. Its pathway is amino-acid biosynthesis; L-histidine biosynthesis; L-histidine from 5-phospho-alpha-D-ribose 1-diphosphate: step 7/9. The chain is Histidinol-phosphate aminotransferase 2 from Dechloromonas aromatica (strain RCB).